A 397-amino-acid chain; its full sequence is Elongation factor Tu 2 (397 aa).

Residues Lys10–Val206 form the tr-type G domain. The segment at Gly19–Thr26 is G1. Gly19–Thr26 contributes to the GTP binding site. Position 26 (Thr26) interacts with Mg(2+). A G2 region spans residues Gly61–Ser65. Residues Asp82–Gly85 form a G3 region. Residues Asp82 to His86 and Asn137 to Asp140 each bind GTP. The segment at Asn137–Asp140 is G4. Positions Ser175 to Leu177 are G5.

Belongs to the TRAFAC class translation factor GTPase superfamily. Classic translation factor GTPase family. EF-Tu/EF-1A subfamily. Monomer.

The protein localises to the cytoplasm. The catalysed reaction is GTP + H2O = GDP + phosphate + H(+). GTP hydrolase that promotes the GTP-dependent binding of aminoacyl-tRNA to the A-site of ribosomes during protein biosynthesis. The sequence is that of Elongation factor Tu 2 from Alkaliphilus metalliredigens (strain QYMF).